A 570-amino-acid chain; its full sequence is Cation/calcium exchanger 1 (570 aa).

The next 13 helical transmembrane spans lie at 14-34, 97-117, 141-161, 176-196, 212-232, 235-255, 344-364, 371-391, 401-421, 427-447, 479-499, 513-533, and 546-566; these read LSLLINIFFIFLIFLHFASQT, SPVLGHLVLSAWLFVLFYLLG, MAGVTLLSLGNGAPDLFSSVV, ILGGAFFVSSFVVGTICVLIG, VFLLVALCCLGLIIFIGKVTI, ALCYLSIYLLYVGFLSVSHFF, CAVVSTAIAPVLLTELYCSHY, LILYIISGSIGLIVGILAYLT, FSLVWLLGGFTMSVTWTYMIA, LLISLGNIFGISPSVLGLTVL, YAGPLFNTVIGLGVPLVISSL, SLLETLGFLMVGLLWALVIMP, and GLLAIYLCFLSLRLARVFGVL.

It belongs to the Ca(2+):cation antiporter (CaCA) (TC 2.A.19) family. Cation/calcium exchanger (CCX) subfamily. As to expression, expressed in roots, leaves, stems and flowers.

The protein resides in the vacuole membrane. In terms of biological role, vacuolar membrane-localized H(+)-dependent K(+) and Na(+) transporter. In Arabidopsis thaliana (Mouse-ear cress), this protein is Cation/calcium exchanger 1 (CCX1).